A 398-amino-acid chain; its full sequence is Dual-specificity RNA methyltransferase RlmN (398 aa).

The active-site Proton acceptor is the Glu121. In terms of domain architecture, Radical SAM core spans 127–370 (ETDRGTLCVS…VRTPRGRDIL (244 aa)). A disulfide bridge connects residues Cys134 and Cys373. 3 residues coordinate [4Fe-4S] cluster: Cys141, Cys145, and Cys148. S-adenosyl-L-methionine contacts are provided by residues 199-200 (GE), Ser231, 253-255 (SLH), and Asn330. The S-methylcysteine intermediate role is filled by Cys373.

Belongs to the radical SAM superfamily. RlmN family. [4Fe-4S] cluster serves as cofactor.

The protein localises to the cytoplasm. The catalysed reaction is adenosine(2503) in 23S rRNA + 2 reduced [2Fe-2S]-[ferredoxin] + 2 S-adenosyl-L-methionine = 2-methyladenosine(2503) in 23S rRNA + 5'-deoxyadenosine + L-methionine + 2 oxidized [2Fe-2S]-[ferredoxin] + S-adenosyl-L-homocysteine. The enzyme catalyses adenosine(37) in tRNA + 2 reduced [2Fe-2S]-[ferredoxin] + 2 S-adenosyl-L-methionine = 2-methyladenosine(37) in tRNA + 5'-deoxyadenosine + L-methionine + 2 oxidized [2Fe-2S]-[ferredoxin] + S-adenosyl-L-homocysteine. Its function is as follows. Specifically methylates position 2 of adenine 2503 in 23S rRNA and position 2 of adenine 37 in tRNAs. m2A2503 modification seems to play a crucial role in the proofreading step occurring at the peptidyl transferase center and thus would serve to optimize ribosomal fidelity. The chain is Dual-specificity RNA methyltransferase RlmN from Rhodopseudomonas palustris (strain BisB5).